The sequence spans 140 residues: Fluoride-specific ion channel FluC 1 (140 aa).

4 helical membrane-spanning segments follow: residues 3-23 (TGATLIELLAVALGGGTGAAA), 38-58 (APLWSLAVVNLLGTVVLGLVL), 80-100 (ILYPLLGIGLAGGFTTFSTVM), and 113-133 (IAGVVGMAVVCCAVFLPALWC). Na(+)-binding residues include glycine 91 and threonine 94.

This sequence belongs to the fluoride channel Fluc/FEX (TC 1.A.43) family.

The protein localises to the cell membrane. It carries out the reaction fluoride(in) = fluoride(out). Its activity is regulated as follows. Na(+) is not transported, but it plays an essential structural role and its presence is essential for fluoride channel function. Its function is as follows. Fluoride-specific ion channel. Important for reducing fluoride concentration in the cell, thus reducing its toxicity. The protein is Fluoride-specific ion channel FluC 1 of Corynebacterium jeikeium (strain K411).